Here is a 201-residue protein sequence, read N- to C-terminus: Basic helix-loop-helix transcription factor scleraxis (201 aa).

Disordered regions lie at residues 1–92 (MSFA…NSVN) and 148–177 (AFFHAARAGSPPPPPPPPPARDGENTQPKQ). Residues 59–69 (RRAGGGGPGGR) show a composition bias toward gly residues. Positions 70-88 (PGREPRQRHTANARERDRT) are enriched in basic and acidic residues. In terms of domain architecture, bHLH spans 75 to 127 (RQRHTANARERDRTNSVNTAFTALRTLIPTEPADRKLSKIETLRLASSYISHL). Over residues 157-167 (SPPPPPPPPPA) the composition is skewed to pro residues.

In terms of assembly, efficient DNA binding requires dimerization with another bHLH protein. Dimerizes and binds the E-box consensus sequence with E12.

The protein localises to the nucleus. In terms of biological role, plays an early essential role in mesoderm formation, as well as a later role in formation of somite-derived chondrogenic lineages. This is Basic helix-loop-helix transcription factor scleraxis (SCX) from Homo sapiens (Human).